The chain runs to 203 residues: Large ribosomal subunit protein uL18 (203 aa).

The protein belongs to the universal ribosomal protein uL18 family. As to quaternary structure, part of the 50S ribosomal subunit. Contacts the 5S and 23S rRNAs.

Functionally, this is one of the proteins that bind and probably mediate the attachment of the 5S RNA into the large ribosomal subunit, where it forms part of the central protuberance. This is Large ribosomal subunit protein uL18 from Pyrococcus abyssi (strain GE5 / Orsay).